The chain runs to 497 residues: Glycogen synthase (497 aa).

Lys-15 contacts ADP-alpha-D-glucose.

This sequence belongs to the glycosyltransferase 1 family. Bacterial/plant glycogen synthase subfamily.

It carries out the reaction [(1-&gt;4)-alpha-D-glucosyl](n) + ADP-alpha-D-glucose = [(1-&gt;4)-alpha-D-glucosyl](n+1) + ADP + H(+). It functions in the pathway glycan biosynthesis; glycogen biosynthesis. In terms of biological role, synthesizes alpha-1,4-glucan chains using ADP-glucose. In Thermodesulfovibrio yellowstonii (strain ATCC 51303 / DSM 11347 / YP87), this protein is Glycogen synthase.